Reading from the N-terminus, the 1101-residue chain is Serine/threonine-protein kinase PSK2 (1101 aa).

The residue at position 118 (Thr-118) is a Phosphothreonine. A Protein kinase domain is found at 841–1099 (FTILQVMGEG…IDEIYEDKWL (259 aa)). ATP contacts are provided by residues 847-855 (MGEGAYGKV) and Lys-870. Catalysis depends on Asp-975, which acts as the Proton acceptor.

It belongs to the protein kinase superfamily. Ser/Thr protein kinase family.

It localises to the cytoplasm. The catalysed reaction is L-seryl-[protein] + ATP = O-phospho-L-seryl-[protein] + ADP + H(+). The enzyme catalyses L-threonyl-[protein] + ATP = O-phospho-L-threonyl-[protein] + ADP + H(+). Functionally, serine/threonine-protein kinase involved in the control of sugar metabolism and translation. Phosphorylates UGP1, which is required for normal glycogen and beta-(1,6)-glucan synthesis. This phosphorylation shifts glucose partitioning toward cell wall glucan synthesis at the expense of glycogen synthesis. Also phosphorylates the glycogen synthase GSY2 and the translation factors CAF20, TIF11 and SRO9. The chain is Serine/threonine-protein kinase PSK2 (PSK2) from Saccharomyces cerevisiae (strain ATCC 204508 / S288c) (Baker's yeast).